Consider the following 271-residue polypeptide: 3-methyl-2-oxobutanoate hydroxymethyltransferase (271 aa).

Residues aspartate 50 and aspartate 89 each contribute to the Mg(2+) site. 3-methyl-2-oxobutanoate-binding positions include 50–51, aspartate 89, and lysine 118; that span reads DS. Position 120 (glutamate 120) interacts with Mg(2+). Residue glutamate 187 is the Proton acceptor of the active site.

The protein belongs to the PanB family. As to quaternary structure, homodecamer; pentamer of dimers. Mg(2+) is required as a cofactor.

The protein localises to the cytoplasm. The enzyme catalyses 3-methyl-2-oxobutanoate + (6R)-5,10-methylene-5,6,7,8-tetrahydrofolate + H2O = 2-dehydropantoate + (6S)-5,6,7,8-tetrahydrofolate. It participates in cofactor biosynthesis; (R)-pantothenate biosynthesis; (R)-pantoate from 3-methyl-2-oxobutanoate: step 1/2. In terms of biological role, catalyzes the reversible reaction in which hydroxymethyl group from 5,10-methylenetetrahydrofolate is transferred onto alpha-ketoisovalerate to form ketopantoate. The polypeptide is 3-methyl-2-oxobutanoate hydroxymethyltransferase (Campylobacter concisus (strain 13826)).